Here is a 170-residue protein sequence, read N- to C-terminus: 3-hydroxydecanoyl-[acyl-carrier-protein] dehydratase (170 aa).

His-69 is a catalytic residue.

The protein belongs to the thioester dehydratase family. FabA subfamily. As to quaternary structure, homodimer.

The protein resides in the cytoplasm. The catalysed reaction is a (3R)-hydroxyacyl-[ACP] = a (2E)-enoyl-[ACP] + H2O. It catalyses the reaction (3R)-hydroxydecanoyl-[ACP] = (2E)-decenoyl-[ACP] + H2O. It carries out the reaction (2E)-decenoyl-[ACP] = (3Z)-decenoyl-[ACP]. It functions in the pathway lipid metabolism; fatty acid biosynthesis. Its function is as follows. Necessary for the introduction of cis unsaturation into fatty acids. Catalyzes the dehydration of (3R)-3-hydroxydecanoyl-ACP to E-(2)-decenoyl-ACP and then its isomerization to Z-(3)-decenoyl-ACP. Can catalyze the dehydratase reaction for beta-hydroxyacyl-ACPs with saturated chain lengths up to 16:0, being most active on intermediate chain length. The chain is 3-hydroxydecanoyl-[acyl-carrier-protein] dehydratase from Caulobacter vibrioides (strain ATCC 19089 / CIP 103742 / CB 15) (Caulobacter crescentus).